We begin with the raw amino-acid sequence, 82 residues long: UPF0335 protein pRhico085 (82 aa).

Belongs to the UPF0335 family.

This is UPF0335 protein pRhico085 from Azospirillum brasilense.